Consider the following 290-residue polypeptide: Protease HtpX (290 aa).

Helical transmembrane passes span 4–24 (IFLF…TLKL) and 36–56 (GSLL…SLFI). Zn(2+) is bound at residue H142. E143 is a catalytic residue. Residue H146 participates in Zn(2+) binding. 2 helical membrane-spanning segments follow: residues 150–170 (GDMV…MFFA) and 193–213 (FVAT…IVMW). E219 contributes to the Zn(2+) binding site.

Belongs to the peptidase M48B family. Requires Zn(2+) as cofactor.

It localises to the cell inner membrane. This Stutzerimonas stutzeri (strain A1501) (Pseudomonas stutzeri) protein is Protease HtpX.